A 137-amino-acid polypeptide reads, in one-letter code: Putative nickel-responsive regulator (137 aa).

Ni(2+) contacts are provided by histidine 78, histidine 89, histidine 91, and cysteine 97.

Belongs to the transcriptional regulatory CopG/NikR family. Ni(2+) serves as cofactor.

Functionally, transcriptional regulator. This chain is Putative nickel-responsive regulator, found in Syntrophus aciditrophicus (strain SB).